Consider the following 153-residue polypeptide: Nuclear cap-binding protein subunit 2 (153 aa).

MRNA is bound by residues tyrosine 17, tyrosine 40, 109–113, 120–124, and 130–131; these read RTDWD, RQYGR, and QV. An RRM domain is found at 37-115; sequence CTLYVGNLSF…RIIRTDWDAG (79 aa).

Belongs to the RRM NCBP2 family. In terms of assembly, component of the nuclear cap-binding complex (CBC), a heterodimer composed of ncbp1/cbp80 and ncbp2/cbp20 that interacts with m7GpppG-capped RNA.

Its subcellular location is the nucleus. The protein localises to the cytoplasm. Its function is as follows. Component of the cap-binding complex (CBC), which binds co-transcriptionally to the 5' cap of pre-mRNAs and is involved in various processes such as pre-mRNA splicing, translation regulation, nonsense-mediated mRNA decay, RNA-mediated gene silencing (RNAi) by microRNAs (miRNAs) and mRNA export. The CBC complex is involved in mRNA export from the nucleus, leading to the recruitment of the mRNA export machinery to the 5' end of mRNA and to mRNA export in a 5' to 3' direction through the nuclear pore. The CBC complex is also involved in mediating U snRNA and intronless mRNAs export from the nucleus. The CBC complex is essential for a pioneer round of mRNA translation, before steady state translation when the CBC complex is replaced by cytoplasmic cap-binding protein eIF4E. The pioneer round of mRNA translation mediated by the CBC complex plays a central role in nonsense-mediated mRNA decay (NMD), NMD only taking place in mRNAs bound to the CBC complex, but not on eIF4E-bound mRNAs. The CBC complex enhances NMD in mRNAs containing at least one exon-junction complex (EJC), promoting the interaction between upf1 and upf2. The CBC complex is also involved in 'failsafe' NMD, which is independent of the EJC complex, while it does not participate in Staufen-mediated mRNA decay (SMD). During cell proliferation, the CBC complex is also involved in microRNAs (miRNAs) biogenesis via its interaction with srrt/ars2, thereby being required for miRNA-mediated RNA interference. The CBC complex also acts as a negative regulator of parn, thereby acting as an inhibitor of mRNA deadenylation. In the CBC complex, ncbp2/cbp20 recognizes and binds capped RNAs (m7GpppG-capped RNA) but requires ncbp1/cbp80 to stabilize the movement of its N-terminal loop and lock the CBC into a high affinity cap-binding state with the cap structure. The conventional cap-binding complex with NCBP2 binds both small nuclear RNA (snRNA) and messenger (mRNA) and is involved in their export from the nucleus. The chain is Nuclear cap-binding protein subunit 2 (ncbp2) from Xenopus tropicalis (Western clawed frog).